The following is a 415-amino-acid chain: Serine--tRNA ligase (415 aa).

231–233 is an L-serine binding site; the sequence is TAE. 262–264 contacts ATP; that stretch reads RSE. Glu285 lines the L-serine pocket. Residue 349–352 coordinates ATP; the sequence is EISS. An L-serine-binding site is contributed by Ser383.

Belongs to the class-II aminoacyl-tRNA synthetase family. Type-1 seryl-tRNA synthetase subfamily. As to quaternary structure, homodimer. The tRNA molecule binds across the dimer.

Its subcellular location is the cytoplasm. The catalysed reaction is tRNA(Ser) + L-serine + ATP = L-seryl-tRNA(Ser) + AMP + diphosphate + H(+). It catalyses the reaction tRNA(Sec) + L-serine + ATP = L-seryl-tRNA(Sec) + AMP + diphosphate + H(+). It functions in the pathway aminoacyl-tRNA biosynthesis; selenocysteinyl-tRNA(Sec) biosynthesis; L-seryl-tRNA(Sec) from L-serine and tRNA(Sec): step 1/1. In terms of biological role, catalyzes the attachment of serine to tRNA(Ser). Is also able to aminoacylate tRNA(Sec) with serine, to form the misacylated tRNA L-seryl-tRNA(Sec), which will be further converted into selenocysteinyl-tRNA(Sec). In Helicobacter pylori (strain HPAG1), this protein is Serine--tRNA ligase.